The chain runs to 244 residues: MDKSELVQKAKLSEQAERYDDMAASMKAVTELGAELSNEERNLLSVAYKNVVGARRSSWRVISSIEQKTEGNDKRQQMAREYREKVETELQDICKDVLGLLDKYLVPNATPPESKVFYLKMKGDYYRYLSEVASGDSKQETVTCSQQAYQEAFEISKSEMQPTHPIRLGLALNFSVFYYEILNSPEKACSLAKSAFDEAIAELDTLNEESYKDSTLIMQLLRDNLTLWTSENQGEEADNAEADN.

M1 carries the post-translational modification N-acetylmethionine.

This sequence belongs to the 14-3-3 family. Homodimer, and heterodimer with other family members.

It localises to the cytoplasm. Functionally, adapter protein implicated in the regulation of a large spectrum of both general and specialized signaling pathways. Binds to a large number of partners, usually by recognition of a phosphoserine or phosphothreonine motif. Binding generally results in the modulation of the activity of the binding partner. This Xenopus tropicalis (Western clawed frog) protein is 14-3-3 protein beta/alpha (ywhab).